The sequence spans 720 residues: Pro-neuregulin-3, membrane-bound isoform (720 aa).

Residues 1–360 (MSEGAAAASP…MESEEVYQRQ (360 aa)) lie on the Extracellular side of the membrane. Disordered stretches follow at residues 28 to 48 (AAAAAAAGGGPDGGGEGAAEP), 119 to 223 (SSFP…AMPS), and 246 to 280 (PFQDAASSSSSSSSSATTTTPETSTSPKFHTTTYS). The span at 34 to 44 (AGGGPDGGGEG) shows a compositional bias: gly residues. A compositionally biased stretch (low complexity) spans 127–148 (TTTTTTSTTSPATPSAGGAASS). Positions 149-163 (RTPNRISTRLTTITR) are enriched in polar residues. Low complexity-rich tracts occupy residues 187–205 (TAAPATVPSTTAPFFSSST) and 250–271 (AASSSSSSSSSATTTTPETSTS). An EGF-like domain is found at 286-329 (HFKPCRDKDLAYCLNDGECFVIETLTGSHKHCRCKEGYQGVRCD). Intrachain disulfides connect Cys290–Cys304, Cys298–Cys317, and Cys319–Cys328. A helical membrane pass occupies residues 361–381 (VLSISCIIFGIVIVGMFCAAF). Over 382–720 (YFKSKKQAKQ…EIQRDSALTK (339 aa)) the chain is Cytoplasmic. The interval 451–481 (PQSFPEVPSPDRGSQSVKHHRSLSSCCSPGQ) is disordered.

The protein belongs to the neuregulin family. Interacts with ERBB4. Proteolytic cleavage close to the plasma membrane on the external face leads to the release of the soluble growth factor form. In terms of processing, extensive glycosylation precedes the proteolytic cleavage. Isoform 3 is glycosylated. Highly expressed in most regions of the brain with the exception of corpus callosum. Expressed at lower level in testis. Not detected in heart, placenta, lung, liver, skeletal muscle, kidney, pancreas, spleen, thymus, prostate, ovary, small intestine, colon and peripheral blood leukocytes.

The protein resides in the cell membrane. It localises to the secreted. In terms of biological role, direct ligand for the ERBB4 tyrosine kinase receptor. Binding results in ligand-stimulated tyrosine phosphorylation and activation of the receptor. Does not bind to the EGF receptor, ERBB2 or ERBB3 receptors. May be a survival factor for oligodendrocytes. The polypeptide is Pro-neuregulin-3, membrane-bound isoform (NRG3) (Homo sapiens (Human)).